A 173-amino-acid chain; its full sequence is Disulfide bond formation protein B (173 aa).

Topologically, residues 1–14 (MIEFLRRIAAHRLA) are cytoplasmic. The chain crosses the membrane as a helical span at residues 15-31 (WGLLAASALFLELSALF). Residues 32 to 49 (FQYVLGLHPCVMCVYERL) are Periplasmic-facing. A disulfide bridge links Cys-41 with Cys-44. A helical transmembrane segment spans residues 50–65 (AILGVLSAGLLGMVAP). Topologically, residues 66–72 (EKWYLRW) are cytoplasmic. A helical membrane pass occupies residues 73-90 (SALLLWGYSAFRGLQLAL). At 91 to 145 (KHVDYQMNPSPFNVCSPFADFPSWAPLDQWLPWLFFPDGDCSEISWQFLSFSMPQ) the chain is on the periplasmic side. Residues Cys-105 and Cys-131 are joined by a disulfide bond. A helical membrane pass occupies residues 146–164 (WLVAIFAAYLLVFVVVTIG). Over 165–173 (NLVKGRCCS) the chain is Cytoplasmic.

Belongs to the DsbB family.

The protein localises to the cell inner membrane. Its function is as follows. Required for disulfide bond formation in some periplasmic proteins. Acts by oxidizing the DsbA protein. The sequence is that of Disulfide bond formation protein B from Aeromonas salmonicida (strain A449).